The chain runs to 362 residues: Phosphoserine aminotransferase (362 aa).

Residues serine 9 and arginine 42 each coordinate L-glutamate. Pyridoxal 5'-phosphate-binding positions include 76–77 (GR), tryptophan 102, threonine 153, aspartate 174, and glutamine 197. Lysine 198 is modified (N6-(pyridoxal phosphate)lysine). Residue 239–240 (NT) participates in pyridoxal 5'-phosphate binding.

This sequence belongs to the class-V pyridoxal-phosphate-dependent aminotransferase family. SerC subfamily. Homodimer. Pyridoxal 5'-phosphate serves as cofactor.

It localises to the cytoplasm. It carries out the reaction O-phospho-L-serine + 2-oxoglutarate = 3-phosphooxypyruvate + L-glutamate. It catalyses the reaction 4-(phosphooxy)-L-threonine + 2-oxoglutarate = (R)-3-hydroxy-2-oxo-4-phosphooxybutanoate + L-glutamate. The protein operates within amino-acid biosynthesis; L-serine biosynthesis; L-serine from 3-phospho-D-glycerate: step 2/3. It functions in the pathway cofactor biosynthesis; pyridoxine 5'-phosphate biosynthesis; pyridoxine 5'-phosphate from D-erythrose 4-phosphate: step 3/5. Functionally, catalyzes the reversible conversion of 3-phosphohydroxypyruvate to phosphoserine and of 3-hydroxy-2-oxo-4-phosphonooxybutanoate to phosphohydroxythreonine. The protein is Phosphoserine aminotransferase of Salmonella choleraesuis (strain SC-B67).